The following is a 469-amino-acid chain: Acetyl-CoA decarbonylase/synthase complex subunit beta 1 (469 aa).

The [Ni-Fe-S] cluster site is built by cysteine 189, cysteine 192, cysteine 278, and cysteine 280.

It belongs to the CdhC family. In terms of assembly, monomer. The ACDS complex is made up of alpha, epsilon, beta, gamma and delta chains with a probable stoichiometry of (alpha(2)epsilon(2))(4)-beta(8)-(gamma(1)delta(1))(8) (Potential). [Ni-Fe-S] cluster is required as a cofactor.

It carries out the reaction Co(I)-[corrinoid Fe-S protein] + acetyl-CoA + H(+) = methyl-Co(III)-[corrinoid Fe-S protein] + CO + CoA. The protein operates within one-carbon metabolism; methanogenesis from acetate. Part of a complex that catalyzes the reversible cleavage of acetyl-CoA, allowing growth on acetate as sole source of carbon and energy. The alpha-epsilon complex generates CO from CO(2), while the beta subunit (this protein) combines the CO with CoA and a methyl group to form acetyl-CoA. The methyl group, which is incorporated into acetyl-CoA, is transferred to the beta subunit by a corrinoid iron-sulfur protein (the gamma-delta complex). This Methanosarcina acetivorans (strain ATCC 35395 / DSM 2834 / JCM 12185 / C2A) protein is Acetyl-CoA decarbonylase/synthase complex subunit beta 1 (cdhC1).